Consider the following 376-residue polypeptide: Probable low-specificity L-threonine aldolase (376 aa).

Positions 1-21 (MSGSVTSTTTETRLCPSNQGS) are enriched in polar residues. Residues 1–22 (MSGSVTSTTTETRLCPSNQGSA) form a disordered region. The residue at position 226 (K226) is an N6-(pyridoxal phosphate)lysine.

Belongs to the threonine aldolase family. In terms of assembly, homotetramer. Requires pyridoxal 5'-phosphate as cofactor.

It catalyses the reaction L-threonine = acetaldehyde + glycine. The enzyme catalyses L-allo-threonine = acetaldehyde + glycine. Its pathway is amino-acid degradation; L-threonine degradation via aldolase pathway; acetaldehyde and glycine from L-threonine: step 1/1. This Schizosaccharomyces pombe (strain 972 / ATCC 24843) (Fission yeast) protein is Probable low-specificity L-threonine aldolase (gly1).